We begin with the raw amino-acid sequence, 285 residues long: HTH-type transcriptional regulator MurR (285 aa).

The HTH rpiR-type domain maps to 1-77 (MLYLTKISNA…MALIGEYSAS (77 aa)). Residues 37–56 (SRQMAKQLGISQSSIVKFAQ) constitute a DNA-binding region (H-T-H motif). Residues 128–279 (IIEVISKAPF…SLKMIQRSSE (152 aa)) form the SIS domain.

As to quaternary structure, homotetramer.

It functions in the pathway amino-sugar metabolism; N-acetylmuramate degradation [regulation]. In terms of biological role, represses the expression of the murPQ operon involved in the uptake and degradation of N-acetylmuramic acid (MurNAc). Binds to two adjacent inverted repeats within the operator region. MurNAc 6-phosphate, the substrate of MurQ, is the specific inducer that weakens binding of MurR to the operator. This Shigella boydii serotype 18 (strain CDC 3083-94 / BS512) protein is HTH-type transcriptional regulator MurR.